Reading from the N-terminus, the 316-residue chain is Ribosomal RNA small subunit methyltransferase H (316 aa).

S-adenosyl-L-methionine is bound by residues 35 to 37, D55, F84, D105, and Q112; that span reads AGH.

This sequence belongs to the methyltransferase superfamily. RsmH family.

It localises to the cytoplasm. The enzyme catalyses cytidine(1402) in 16S rRNA + S-adenosyl-L-methionine = N(4)-methylcytidine(1402) in 16S rRNA + S-adenosyl-L-homocysteine + H(+). Its function is as follows. Specifically methylates the N4 position of cytidine in position 1402 (C1402) of 16S rRNA. In Streptococcus thermophilus (strain CNRZ 1066), this protein is Ribosomal RNA small subunit methyltransferase H.